The sequence spans 64 residues: Beta-defensin 1 (64 aa).

A signal peptide spans 1–22; that stretch reads MRLHHLLLVLFFVVLSAGSGFT. 3 disulfides stabilise this stretch: Cys-31/Cys-60, Cys-38/Cys-53, and Cys-43/Cys-61.

The protein belongs to the beta-defensin family. As to quaternary structure, monomer. Homodimer.

The protein resides in the secreted. It localises to the membrane. Has bactericidal activity. May act as a ligand for C-C chemokine receptor CCR6. Positively regulates the sperm motility and bactericidal activity in a CCR6-dependent manner. Binds to CCR6 and triggers Ca2+ mobilization in the sperm which is important for its motility. This chain is Beta-defensin 1 (DEFB1), found in Ovis aries (Sheep).